Consider the following 537-residue polypeptide: Putative cysteine ligase BshC (537 aa).

Residues 415–439 (EKASNNFINEVEEMKIQQQELYNNL) adopt a coiled-coil conformation.

This sequence belongs to the BshC family.

Its function is as follows. Involved in bacillithiol (BSH) biosynthesis. May catalyze the last step of the pathway, the addition of cysteine to glucosamine malate (GlcN-Mal) to generate BSH. This chain is Putative cysteine ligase BshC, found in Staphylococcus epidermidis (strain ATCC 12228 / FDA PCI 1200).